Consider the following 595-residue polypeptide: Putative laccase-18 (595 aa).

The first 29 residues, 1-29 (MEKLSTAASLFGVVVAATALAMAVVGGEA), serve as a signal peptide directing secretion. Plastocyanin-like domains are found at residues 37–153 (MVHE…PRDG) and 162–316 (KDVP…YTGA). 2 N-linked (GlcNAc...) asparagine glycosylation sites follow: Asn42 and Asn48. Positions 87 and 89 each coordinate Cu cation. A glycan (N-linked (GlcNAc...) asparagine) is linked at Asn121. 2 residues coordinate Cu cation: His132 and His134. 7 N-linked (GlcNAc...) asparagine glycosylation sites follow: Asn206, Asn345, Asn382, Asn402, Asn409, Asn439, and Asn470. The Plastocyanin-like 3 domain occupies 429 to 571 (DFPVRPPRPF…ATAFIVEDGP (143 aa)). Cu cation contacts are provided by Asn488, His491, His493, His550, Cys551, His552, His556, and Met561. Residues 570–595 (GPTPETSLPPPPPEFKRCGTNGLSQP) form a disordered region.

This sequence belongs to the multicopper oxidase family. Cu cation serves as cofactor.

It localises to the secreted. The protein localises to the extracellular space. Its subcellular location is the apoplast. It carries out the reaction 4 hydroquinone + O2 = 4 benzosemiquinone + 2 H2O. In terms of biological role, lignin degradation and detoxification of lignin-derived products. This is Putative laccase-18 (LAC18) from Oryza sativa subsp. indica (Rice).